A 128-amino-acid polypeptide reads, in one-letter code: Mediator of RNA polymerase II transcription subunit 31-A (128 aa).

The protein belongs to the Mediator complex subunit 31 family. As to quaternary structure, component of the Mediator complex.

The protein resides in the nucleus. In terms of biological role, component of the Mediator complex, a coactivator involved in the regulated transcription of nearly all RNA polymerase II-dependent genes. Mediator functions as a bridge to convey information from gene-specific regulatory proteins to the basal RNA polymerase II transcription machinery. Mediator is recruited to promoters by direct interactions with regulatory proteins and serves as a scaffold for the assembly of a functional preinitiation complex with RNA polymerase II and the general transcription factors. The protein is Mediator of RNA polymerase II transcription subunit 31-A (med31-a) of Xenopus laevis (African clawed frog).